The chain runs to 111 residues: C-X-C motif chemokine 14 (111 aa).

Positions Met-1–Gly-34 are cleaved as a signal peptide. Cystine bridges form between Cys-37–Cys-63 and Cys-39–Cys-84. A D-box motif is present at residues Met-67–Gln-81.

It belongs to the intercrine alpha (chemokine CxC) family. Ubiquitinated, followed by degradation by the proteasome. As to expression, expressed in heart, brain, placenta, lung, liver, skeletal muscle, kidney and pancreas. Highly expressed in normal tissue without inflammatory stimuli and infrequently expressed in cancer cell lines. Weakly expressed in monocyte-derived dendritic cells. Not detected in lung or unstimulated peripheral blood lymphocytes.

It is found in the secreted. Functionally, potent chemoattractant for neutrophils, and weaker for dendritic cells. Not chemotactic for T-cells, B-cells, monocytes, natural killer cells or granulocytes. Does not inhibit proliferation of myeloid progenitors in colony formation assays. The protein is C-X-C motif chemokine 14 (CXCL14) of Homo sapiens (Human).